The primary structure comprises 438 residues: Cell division cycle-associated 7-like protein (438 aa).

Residues 9-33 (IPKEVADIFNAPSDDEEFVGFQDDV) carry the Integrase domain-binding motif 1 (IBM1) motif. A Phosphoserine modification is found at Ser-21. Positions 55 to 114 (ACLHSKYFTEELRRIFKEDTDSDNEDFEGFTESELNIGSNPELIESELSDGDKTHPMMSD) are PSIP1-binding. The short motif at 62-88 (FTEELRRIFKEDTDSDNEDFEGFTESE) is the Integrase domain-binding motif 2 (IBM2) element. The tract at residues 72–199 (EDTDSDNEDF…ESRAESQETS (128 aa)) is disordered. Thr-74 bears the Phosphothreonine mark. The span at 74-85 (TDSDNEDFEGFT) shows a compositional bias: acidic residues. Ser-76 carries the post-translational modification Phosphoserine. Phosphothreonine is present on Thr-85. Phosphoserine occurs at positions 100, 103, 113, 135, 136, 183, and 185. Residues 113 to 123 (SDEEDDDDEEE) are compositionally biased toward acidic residues. Positions 166–183 (TDLRREKSCRQPKEKEDS) are enriched in basic and acidic residues. Positions 201–223 (ALLKRAMNIKENKAMLAQLLAEL) are MYC-binding. Glycyl lysine isopeptide (Lys-Gly) (interchain with G-Cter in SUMO2) cross-links involve residues Lys-210 and Lys-213. Phosphoserine is present on Ser-249.

Interacts with MYC. Interacts (via IBM motifs) with PSIP1 (via IBD domain); phosphorylation increases its affinity for PSIP1. In terms of processing, phosphorylation increases its interaction with PSIP1.

The protein localises to the cytoplasm. It is found in the nucleus. Functionally, plays a role in transcriptional regulation as a repressor that inhibits monoamine oxidase A (MAOA) activity and gene expression by binding to the promoter. Plays an important oncogenic role in mediating the full transforming effect of MYC in medulloblastoma cells. Involved in apoptotic signaling pathways; May act downstream of P38-kinase and BCL-2, but upstream of CASP3/caspase-3 as well as CCND1/cyclin D1 and E2F1. The sequence is that of Cell division cycle-associated 7-like protein (Cdca7l) from Rattus norvegicus (Rat).